The primary structure comprises 124 residues: Hydrogenase maturation factor HypA (124 aa).

Position 2 (His-2) interacts with Ni(2+). Zn(2+) is bound by residues Cys-78, Cys-81, Cys-97, and Cys-100.

Belongs to the HypA/HybF family.

Functionally, involved in the maturation of [NiFe] hydrogenases. Required for nickel insertion into the metal center of the hydrogenase. This is Hydrogenase maturation factor HypA from Methanocaldococcus jannaschii (strain ATCC 43067 / DSM 2661 / JAL-1 / JCM 10045 / NBRC 100440) (Methanococcus jannaschii).